We begin with the raw amino-acid sequence, 983 residues long: Protein translocase subunit SecA (983 aa).

ATP-binding positions include glutamine 83, 101–105, and aspartate 489; that span reads GEGKT. Residues 948–983 form a disordered region; that stretch reads ISSEEEDNNEKTNINNNEDLERTKGEAQQTAKNPNE. The span at 973-983 shows a compositional bias: polar residues; it reads EAQQTAKNPNE.

Belongs to the SecA family. Monomer and homodimer. Part of the essential Sec protein translocation apparatus which comprises SecA, SecYEG and auxiliary proteins SecDF. Other proteins may also be involved.

It localises to the cell membrane. Its subcellular location is the cytoplasm. It carries out the reaction ATP + H2O + cellular proteinSide 1 = ADP + phosphate + cellular proteinSide 2.. In terms of biological role, part of the Sec protein translocase complex. Interacts with the SecYEG preprotein conducting channel. Has a central role in coupling the hydrolysis of ATP to the transfer of proteins into and across the cell membrane, serving as an ATP-driven molecular motor driving the stepwise translocation of polypeptide chains across the membrane. This is Protein translocase subunit SecA from Mesomycoplasma hyopneumoniae (strain J / ATCC 25934 / NCTC 10110) (Mycoplasma hyopneumoniae).